Here is a 472-residue protein sequence, read N- to C-terminus: MAKCGSCGPGYKTPLDAMKGPREEILYLPCIYRNTGINKPDYLATVDVNPKSPKYSQVIHRLPMPNTNDELHHSGWNTCSSCYGDASKVRNKLILPCLISSRIYVVDVGTDPRAPRIHKTVEPYEVFWKCGLANLHTSHCLGCGEIMISSIGDPYGNGKGGFVLLDGETFEVKGNWEAEGEAAPFGYDFWYQPRHNVMISTEWGAPKAFALGFKMEEVQAGMYGHSLNVWDWTEHRRIQTIDLGEDGLIPLEIRFLHDPDAAQGLVGCALSSTVFRFYKEKDGKWAAEKVIKVPSKKVEGWALPEMPGLITDILISLDDRFLYFSNWLHGDIRQYDITDPRNPKLVGQIFLGGSILRGGPVTVLEDKDLECQPDPVIVKGKKVPGGPQMIQLSLDGKRLYVTNSLYSKWDKQFYPDMIKEGSVMLQIDVDTEKGGLKLNPNFLVDFGKEPGGPVLAHELRYPGGDCSSDIWV.

The protein belongs to the selenium-binding protein family.

It is found in the nucleus. The protein localises to the cytoplasm. The protein resides in the cytosol. Its subcellular location is the membrane. The enzyme catalyses methanethiol + O2 + H2O = hydrogen sulfide + formaldehyde + H2O2 + H(+). It functions in the pathway organosulfur degradation. Functionally, catalyzes the oxidation of methanethiol, an organosulfur compound known to be produced in substantial amounts by gut bacteria. Selenium-binding protein which may be involved in the sensing of reactive xenobiotics in the cytoplasm. May be involved in intra-Golgi protein transport. The protein is Methanethiol oxidase (selenbp1) of Xenopus tropicalis (Western clawed frog).